A 418-amino-acid polypeptide reads, in one-letter code: AP-3 complex subunit mu-1 (418 aa).

In terms of domain architecture, MHD spans 176–417; that stretch reads NNEAYFDVVE…VTKAGKFQVR (242 aa).

Belongs to the adaptor complexes medium subunit family. Adaptor protein complex 3 (AP-3) is a heterotetramer composed of two large adaptins (delta-type subunit AP3D1 and beta-type subunit AP3B1 or AP3B2), a medium adaptin (mu-type subunit AP3M1 or AP3M2) and a small adaptin (sigma-type subunit APS1 or AP3S2). Interacts with AGAP1. AP-3 associates with the BLOC-1 complex. As to quaternary structure, (Microbial infection) Interacts with human respiratory virus (HRSV) matrix protein; this interaction plays an essential role in trafficking the matrix protein in host cells.

The protein resides in the golgi apparatus. Its subcellular location is the cytoplasmic vesicle membrane. Functionally, part of the AP-3 complex, an adaptor-related complex which is not clathrin-associated. The complex is associated with the Golgi region as well as more peripheral structures. It facilitates the budding of vesicles from the Golgi membrane and may be directly involved in trafficking to lysosomes. In concert with the BLOC-1 complex, AP-3 is required to target cargos into vesicles assembled at cell bodies for delivery into neurites and nerve terminals. The polypeptide is AP-3 complex subunit mu-1 (AP3M1) (Homo sapiens (Human)).